The chain runs to 316 residues: Pantothenate kinase (316 aa).

Residue 95–102 (GSVAVGKS) coordinates ATP.

This sequence belongs to the prokaryotic pantothenate kinase family.

The protein localises to the cytoplasm. The enzyme catalyses (R)-pantothenate + ATP = (R)-4'-phosphopantothenate + ADP + H(+). The protein operates within cofactor biosynthesis; coenzyme A biosynthesis; CoA from (R)-pantothenate: step 1/5. The sequence is that of Pantothenate kinase from Shewanella sp. (strain MR-7).